A 366-amino-acid polypeptide reads, in one-letter code: Beta sliding clamp (366 aa).

Belongs to the beta sliding clamp family. As to quaternary structure, forms a ring-shaped head-to-tail homodimer around DNA which binds and tethers DNA polymerases and other proteins to the DNA. The DNA replisome complex has a single clamp-loading complex (3 tau and 1 each of delta, delta', psi and chi subunits) which binds 3 Pol III cores (1 core on the leading strand and 2 on the lagging strand) each with a beta sliding clamp dimer. Additional proteins in the replisome are other copies of gamma, psi and chi, Ssb, DNA helicase and RNA primase.

It is found in the cytoplasm. Its function is as follows. Confers DNA tethering and processivity to DNA polymerases and other proteins. Acts as a clamp, forming a ring around DNA (a reaction catalyzed by the clamp-loading complex) which diffuses in an ATP-independent manner freely and bidirectionally along dsDNA. Initially characterized for its ability to contact the catalytic subunit of DNA polymerase III (Pol III), a complex, multichain enzyme responsible for most of the replicative synthesis in bacteria; Pol III exhibits 3'-5' exonuclease proofreading activity. The beta chain is required for initiation of replication as well as for processivity of DNA replication. The protein is Beta sliding clamp (dnaN) of Salmonella typhimurium (strain LT2 / SGSC1412 / ATCC 700720).